We begin with the raw amino-acid sequence, 334 residues long: Holliday junction branch migration complex subunit RuvB (334 aa).

Residues 4-184 (EDRLISGTQK…FGIVQRLEYY (181 aa)) form a large ATPase domain (RuvB-L) region. Residues isoleucine 23, arginine 24, glycine 65, lysine 68, threonine 69, threonine 70, 131–133 (EDY), arginine 174, tyrosine 184, and arginine 221 each bind ATP. Threonine 69 is a Mg(2+) binding site. A small ATPAse domain (RuvB-S) region spans residues 185-255 (DLKSLTRIVL…VAKLALDMLE (71 aa)). Residues 258 to 334 (NEGFDYMDRK…YLHFGFDKPQ (77 aa)) are head domain (RuvB-H). Residues arginine 313 and arginine 318 each contribute to the DNA site.

It belongs to the RuvB family. Homohexamer. Forms an RuvA(8)-RuvB(12)-Holliday junction (HJ) complex. HJ DNA is sandwiched between 2 RuvA tetramers; dsDNA enters through RuvA and exits via RuvB. An RuvB hexamer assembles on each DNA strand where it exits the tetramer. Each RuvB hexamer is contacted by two RuvA subunits (via domain III) on 2 adjacent RuvB subunits; this complex drives branch migration. In the full resolvosome a probable DNA-RuvA(4)-RuvB(12)-RuvC(2) complex forms which resolves the HJ.

It localises to the cytoplasm. It carries out the reaction ATP + H2O = ADP + phosphate + H(+). The RuvA-RuvB-RuvC complex processes Holliday junction (HJ) DNA during genetic recombination and DNA repair, while the RuvA-RuvB complex plays an important role in the rescue of blocked DNA replication forks via replication fork reversal (RFR). RuvA specifically binds to HJ cruciform DNA, conferring on it an open structure. The RuvB hexamer acts as an ATP-dependent pump, pulling dsDNA into and through the RuvAB complex. RuvB forms 2 homohexamers on either side of HJ DNA bound by 1 or 2 RuvA tetramers; 4 subunits per hexamer contact DNA at a time. Coordinated motions by a converter formed by DNA-disengaged RuvB subunits stimulates ATP hydrolysis and nucleotide exchange. Immobilization of the converter enables RuvB to convert the ATP-contained energy into a lever motion, pulling 2 nucleotides of DNA out of the RuvA tetramer per ATP hydrolyzed, thus driving DNA branch migration. The RuvB motors rotate together with the DNA substrate, which together with the progressing nucleotide cycle form the mechanistic basis for DNA recombination by continuous HJ branch migration. Branch migration allows RuvC to scan DNA until it finds its consensus sequence, where it cleaves and resolves cruciform DNA. The polypeptide is Holliday junction branch migration complex subunit RuvB (Psychromonas ingrahamii (strain DSM 17664 / CCUG 51855 / 37)).